The following is a 338-amino-acid chain: Replication factor C small subunit (338 aa).

53 to 60 serves as a coordination point for ATP; that stretch reads GPPGVGKT.

It belongs to the activator 1 small subunits family. RfcS subfamily. As to quaternary structure, heteromultimer composed of small subunits (RfcS) and large subunits (RfcL).

Functionally, part of the RFC clamp loader complex which loads the PCNA sliding clamp onto DNA. The sequence is that of Replication factor C small subunit from Methanosarcina mazei (strain ATCC BAA-159 / DSM 3647 / Goe1 / Go1 / JCM 11833 / OCM 88) (Methanosarcina frisia).